The sequence spans 936 residues: F-box protein dre-1 (936 aa).

Positions 1–67 (MSSSSSPFFH…GSSEADNPTL (67 aa)) are disordered. Residues 22 to 36 (QQSPSYSQNSNSPSQ) are compositionally biased toward low complexity. A compositionally biased stretch (polar residues) spans 48 to 63 (GSTSMRYSPSGSSEAD). An F-box domain is found at 159 to 205 (QDHINRLPEELLLKVFSFLPDKSLLACSSVSYRFNQISNSHEVWKEL). 18 PbH1 repeats span residues 405-427 (SAAP…YITD), 428-450 (NATG…WVKN), 451-473 (HANP…FTFE), 474-496 (HGQG…EVKN), 497-519 (SANP…YVHE), 520-542 (RGRG…WITS), 543-565 (HSDP…YIFG), 566-588 (EGRG…QIRS), 589-611 (QSDP…YVHE), 612-634 (KGRG…WVTT), 635-657 (GSSP…YFYD), 658-680 (QGHG…QIRT), 681-703 (GSNP…LVYN), 704-726 (GGKG…WIKT), 727-749 (DSEP…CIFN), 750-772 (RGKG…LIST), 773-795 (ESNP…EITN), and 796-818 (GATA…CVAT). A UBR-type zinc finger spans residues 843-914 (GLCLFKVSSN…LERHCHLQNV (72 aa)).

As to quaternary structure, component of a SCF ubiquitin ligase complex. Interacts (via F-box) with skr-1. Interacts with blmp-1; the interaction targets blmp-1 for proteasomal degradation. Interacts with ced-9; the interaction inhibits ced-9 activity, either directly or indirectly. As to expression, in mid-embryogenesis, expression is most prominent in epidermal and intestinal cells. By the 1.5-fold stage of embryogenesis, expression is additionally detected in neurons and other cells. During larval and adult stages, highest expression is seen in epidermal seam cells and hypodermis. In larvae, strongly expressed in the P epidermal blast cells and descendents that give rise to the vulva and weakly expressed in the somatic gonad, including the gonadoblasts, the anchor cell and the distal tip cells. Some weak expression also seen in adult spermatheca and uterus. In the musculature, expressed in the pharynx, anal depressor, sex muscles, and body wall muscles. Detected in neurons of the head, tail, ventral cord and periphery. Also expressed in the embryonic tail spike cell.

It localises to the nucleus. It is found in the cytoplasm. Its pathway is protein modification; protein ubiquitination. In terms of biological role, substrate recognition component of a SCF (SKP1-CUL1-F-box protein) E3 ubiquitin-protein ligase complex which mediates the ubiquitination and subsequent proteasomal degradation of target proteins including blmp-1. Promotes ubiquitination of snail family proteins ces-1, scrt-1 and snai-1. Heterochronic protein which is required for the timing of gonad development and epidermal seam cell differentiation. Regulates tail-spike cell death through inhibition of the apoptosis regulator ced-9. The polypeptide is F-box protein dre-1 (Caenorhabditis elegans).